A 630-amino-acid polypeptide reads, in one-letter code: 1-deoxy-D-xylulose-5-phosphate synthase (630 aa).

Thiamine diphosphate is bound by residues His-72 and 113–115 (GHS). Asp-144 lines the Mg(2+) pocket. Thiamine diphosphate-binding positions include 145–146 (GA), Asn-173, Tyr-284, and Glu-367. Asn-173 is a Mg(2+) binding site.

This sequence belongs to the transketolase family. DXPS subfamily. Homodimer. It depends on Mg(2+) as a cofactor. Requires thiamine diphosphate as cofactor.

It carries out the reaction D-glyceraldehyde 3-phosphate + pyruvate + H(+) = 1-deoxy-D-xylulose 5-phosphate + CO2. It functions in the pathway metabolic intermediate biosynthesis; 1-deoxy-D-xylulose 5-phosphate biosynthesis; 1-deoxy-D-xylulose 5-phosphate from D-glyceraldehyde 3-phosphate and pyruvate: step 1/1. Its function is as follows. Catalyzes the acyloin condensation reaction between C atoms 2 and 3 of pyruvate and glyceraldehyde 3-phosphate to yield 1-deoxy-D-xylulose-5-phosphate (DXP). The protein is 1-deoxy-D-xylulose-5-phosphate synthase of Bacillus mycoides (strain KBAB4) (Bacillus weihenstephanensis).